We begin with the raw amino-acid sequence, 585 residues long: Protein NRT1/ PTR FAMILY 4.6 (585 aa).

The next 12 helical transmembrane spans lie at 28–48 (GMLAASFVLVVEILENLAYLA), 75–95 (FMGTAFLLALLGGFLSDAFFS), 96–116 (TFQIFLISASIEFLGLIILTI), 142–162 (AMLFVGLYLVALGVGGIKGSL), 184–204 (FFNYFVFCLACGALVAVTFVV), 211–231 (GWEWGFGVSTIAIFVSILIFL), 343–363 (IVLKMLPIFACTIMLNCCLAQ), 391–411 (IFPVVFIMILAPIYDHLIIPF), 428–448 (IGVGLVLSILAMAVAALVEIK), 465–485 (LPVTFLWIALQYLFLGSADLF), 508–528 (SLSWASLAMGYYLSSVIVSIV), and 554–574 (FYWLMCVLSAANFLHYLFWAM).

It belongs to the major facilitator superfamily. Proton-dependent oligopeptide transporter (POT/PTR) (TC 2.A.17) family. In terms of tissue distribution, expressed in root hairs and in epidermis of both root tips and mature regions of roots. Detected in shoots, stems, flowers, siliques and imbibed seeds. Expressed in vascular tissues in cotyledons, trus leaves, hypocotyls, roots and inflorescence stems.

The protein localises to the cell membrane. Low-affinity proton-dependent nitrate transporter. Involved in constitutive nitrate uptake. Not involved in histidine or dipeptides transport. Involved in (+)-abscisic acid (ABA) transport, but not in gibberellin, indole-3-acetic acid or jasmonic acid import. Mediates cellular ABA uptake. Nitrate does not compete with abscisic acid as a substrate of NPF4.6. The protein is Protein NRT1/ PTR FAMILY 4.6 (NPF4.6) of Arabidopsis thaliana (Mouse-ear cress).